A 416-amino-acid polypeptide reads, in one-letter code: MEPSATPGAQPGVPTSSGEPFHLPPDYEDEFLRYLWRDYLYPKQYEWVLIAAYVAVFLIALVGNTLVCLAVWRNHHMRTVTNYFIVNLSLADVLVTAICLPASLLVDITESWLFGQALCKVIPYLQAVSVSVAVLTLSFIALDRWYAICHPLLFKSTARRARGSILGIWAVSLAVMVPQAAVMECSSVLPELANRTRLFSVCDEHWADELYPKIYHSCFFIVTYLAPLGLMAMAYFQIFRKLWGRQIPGTTSALVRNWKRPSEQLEAQHQGLCTEPQPRARAFLAEVKQMRARRKTAKMLMVVLLVFALCYLPISVLNVLKRVFGMFRQASDREAVYACFTFSHWLVYANSAANPIIYNFLSGKFREQFKAAFSCCLPGLGPGSSARHKSLSLQSRCSVSKVSEHVVLTTVTTVLS.

The disordered stretch occupies residues 1–22 (MEPSATPGAQPGVPTSSGEPFH). Residues 1 to 46 (MEPSATPGAQPGVPTSSGEPFHLPPDYEDEFLRYLWRDYLYPKQYE) are Extracellular-facing. The segment at 26–41 (DYEDEFLRYLWRDYLY) is required for response to orexin-A. Residues 47 to 67 (WVLIAAYVAVFLIALVGNTLV) form a helical membrane-spanning segment. Residues 68 to 82 (CLAVWRNHHMRTVTN) lie on the Cytoplasmic side of the membrane. The chain crosses the membrane as a helical span at residues 83–105 (YFIVNLSLADVLVTAICLPASLL). Residues 106–119 (VDITESWLFGQALC) lie on the Extracellular side of the membrane. Cys119 and Cys202 form a disulfide bridge. The helical transmembrane segment at 120–140 (KVIPYLQAVSVSVAVLTLSFI) threads the bilayer. The Cytoplasmic portion of the chain corresponds to 141–160 (ALDRWYAICHPLLFKSTARR). A helical membrane pass occupies residues 161–182 (ARGSILGIWAVSLAVMVPQAAV). The Extracellular segment spans residues 183–213 (MECSSVLPELANRTRLFSVCDEHWADELYPK). An N-linked (GlcNAc...) asparagine glycan is attached at Asn194. Residues 214-235 (IYHSCFFIVTYLAPLGLMAMAY) form a helical membrane-spanning segment. Residues 236–298 (FQIFRKLWGR…QMRARRKTAK (63 aa)) are Cytoplasmic-facing. A helical membrane pass occupies residues 299–321 (MLMVVLLVFALCYLPISVLNVLK). Residues 322–336 (RVFGMFRQASDREAV) lie on the Extracellular side of the membrane. Residues 337–360 (YACFTFSHWLVYANSAANPIIYNF) traverse the membrane as a helical segment. At 361–416 (LSGKFREQFKAAFSCCLPGLGPGSSARHKSLSLQSRCSVSKVSEHVVLTTVTTVLS) the chain is on the cytoplasmic side.

This sequence belongs to the G-protein coupled receptor 1 family. In terms of tissue distribution, widely expressed.

The protein localises to the cell membrane. In terms of biological role, moderately selective excitatory receptor for orexin-A and, with a lower affinity, for orexin-B neuropeptide. Triggers an increase in cytoplasmic Ca(2+) levels in response to orexin-A binding. In Mus musculus (Mouse), this protein is Orexin/Hypocretin receptor type 1.